We begin with the raw amino-acid sequence, 184 residues long: Adenine phosphoribosyltransferase (184 aa).

It belongs to the purine/pyrimidine phosphoribosyltransferase family. As to quaternary structure, homodimer.

Its subcellular location is the cytoplasm. The enzyme catalyses AMP + diphosphate = 5-phospho-alpha-D-ribose 1-diphosphate + adenine. Its pathway is purine metabolism; AMP biosynthesis via salvage pathway; AMP from adenine: step 1/1. Its function is as follows. Catalyzes a salvage reaction resulting in the formation of AMP, that is energically less costly than de novo synthesis. The polypeptide is Adenine phosphoribosyltransferase (Blochmanniella pennsylvanica (strain BPEN)).